The primary structure comprises 549 residues: Polycomb group RING finger protein 3 homolog mig-32 (549 aa).

The interval 1–263 (MTRKRPALAE…EESMRQKYGQ (263 aa)) is disordered. The segment covering 12-29 (VSSSRSRVTRRSTTGAPS) has biased composition (low complexity). Composition is skewed to acidic residues over residues 38 to 49 (PESDADSEDDYD) and 87 to 100 (MDDD…DGEV). Residues 118–130 (KTAKLQTKKKKKK) are compositionally biased toward basic residues. Positions 134-144 (PETPPTSPSPS) are enriched in pro residues. Residues 145-156 (PSRSVSPSTTKS) are compositionally biased toward low complexity. Basic and acidic residues predominate over residues 205–235 (EEIKLRERAERKARRIEEAKNRPKLTIEQKL). Residues 206-260 (EIKLRERAERKARRIEEAKNRPKLTIEQKLAKLRKKKERRERRKEQEKEESMRQK) are a coiled coil. The span at 236-247 (AKLRKKKERRER) shows a compositional bias: basic residues. Positions 248–258 (RKEQEKEESMR) are enriched in basic and acidic residues. The RING-type zinc-finger motif lies at 329–368 (CGICDGYIVDATTIIDCMHTFCKSCLLTYFESDNNTCPTC).

In terms of assembly, component of a PRC1-like complex.

Its subcellular location is the nucleus. The protein localises to the nucleolus. Component of a Polycomb group (PcG) multiprotein PRC1-like complex, a complex class required to maintain the transcriptionally repressive state of many genes, throughout development. Required for ubiquitination of histone H2A. Plays a role in the formation of the male-specific genital sensilla (simple sense organs) known as rays. Required for normal migration of the hermaphrodite specific neurons (HSN) and for extension of some neuronal processes. Represses vulval fates in hypodermal cells that do not normally contribute to vulval development. The polypeptide is Polycomb group RING finger protein 3 homolog mig-32 (Caenorhabditis elegans).